The following is a 770-amino-acid chain: Probable methyltransferase PMT25 (770 aa).

Residues 1–17 are Cytoplasmic-facing; that stretch reads MAMGKYSRVDGKKSSSY. Residues 18–38 form a helical; Signal-anchor for type II membrane protein membrane-spanning segment; the sequence is GLTITIVLLLSLCLVGTWMFM. Topologically, residues 39–770 are lumenal; the sequence is SSWSAPADSA…ETETIKSAIA (732 aa). The interval 44–238 is disordered; the sequence is PADSAGYSST…SSISKDQSSY (195 aa). Residues 55 to 79 show a composition bias toward basic and acidic residues; it reads TAKDVSKNDLRKEEGDRDPKNFSDE. N-linked (GlcNAc...) asparagine glycans are attached at residues asparagine 75 and asparagine 107. A compositionally biased stretch (polar residues) spans 92 to 109; that stretch reads QVKTDSENSAEGNQVNES. 2 stretches are compositionally biased toward basic and acidic residues: residues 110 to 124 and 131 to 177; these read SGEKTEAGEERKESD and DGEK…KAEE. 2 N-linked (GlcNAc...) asparagine glycosylation sites follow: asparagine 163 and asparagine 178. Composition is skewed to polar residues over residues 205–220 and 227–238; these read ESSTGDGAWSTQLVES and QQSSISKDQSSY. Asparagine 244 and asparagine 363 each carry an N-linked (GlcNAc...) asparagine glycan.

Belongs to the methyltransferase superfamily.

The protein localises to the golgi apparatus membrane. This chain is Probable methyltransferase PMT25, found in Arabidopsis thaliana (Mouse-ear cress).